A 1192-amino-acid chain; its full sequence is Probable ATP-binding protein BrxC (1192 aa).

It belongs to the BrxC family.

Its function is as follows. BREX systems (bacteriophage exclusion) provide immunity against bacteriophage. A core protein of a type 1 BREX system. This system allows phage adsorption but prevents phage DNA replication, without degradation of the phage DNA. Methylation of bacterial DNA by PglX probably guides self/non-self discrimination. When the brxA-brxB-brxC-pglX and pglZ-brxL operons are transformed into a susceptible B.subtilis strain (BEST7003) they confer resistance to bacteriophages SPbeta, SP16, Zeta, phi3T and SP02 and partial protection to phages SP01 and SP82G (these include lytic and temperate phage). They do not protect against phages phi105, rho10 or rho14. Additionally confers a very slight reduction in efficiency of plasmid transformation. The sequence is that of Probable ATP-binding protein BrxC from Bacillus cereus (strain H3081.97).